Reading from the N-terminus, the 198-residue chain is Large ribosomal subunit protein bL25 (198 aa).

Belongs to the bacterial ribosomal protein bL25 family. CTC subfamily. In terms of assembly, part of the 50S ribosomal subunit; part of the 5S rRNA/L5/L18/L25 subcomplex. Contacts the 5S rRNA. Binds to the 5S rRNA independently of L5 and L18.

This is one of the proteins that binds to the 5S RNA in the ribosome where it forms part of the central protuberance. The chain is Large ribosomal subunit protein bL25 from Streptomyces coelicolor (strain ATCC BAA-471 / A3(2) / M145).